The primary structure comprises 403 residues: LIM/homeobox protein Lhx1 (403 aa).

2 LIM zinc-binding domains span residues 4 to 54 (CAGC…CKND) and 63 to 117 (CAGC…CKED). Over residues 131–147 (ISVTGSDPSLSPESQDP) the composition is skewed to polar residues. Disordered stretches follow at residues 131–185 (ISVT…PRTT) and 318–366 (PAGT…SMHS). The segment covering 150–166 (DDAKDSESANVSDKEAG) has biased composition (basic and acidic residues). Positions 179 to 238 (RRGPRTTIKAKQLETLKAAFAATPKPTRHIREQLAQETGLNMRVIQVWFQNRRSKERRMK) form a DNA-binding region, homeobox.

As to quaternary structure, interacts with ldb1 via the tandem LIM domains. Both LIM domains are required for optimal binding and binding relieves the inhibitory effect of the LIM domains and activates lhx1. Binding to ldb1 also prevents degradation of ldb1 by rnf12. The stoichiometry of lhx1 and ldb1 is important for their function and an excess of ldb1 can inhibit lhx1 function. Interacts with the N-terminal region of rnf12 by a homeobox-dependent mechanism. As to expression, exhibits a biphasic expression pattern. Initially localized to the Spemann organizer region of gastrulae, leading to expression in prechordal mesoderm and notochord. In the second phase, expressed in the lateral mesoderm and neural plate, eventually concentrating in the pronephros and the CNS. Expressed in the pronephros primordium by late gastrula (stage 12.5) and becomes restricted to the tips of the tubules and ducts as kidney development progresses. In the CNS, becomes progressively recognizable in anatomically distinct structures during larval development. Within the forebrain, shows almost identical expression to lhx5 in the diencephalon, being expressed in alternating stripes to lhx2 and lhx9. Expressed in the diencephalic pretectum within prosomere 1, hypothalamus, ventral thalamus and zona limitans intrathalamica. In the telencephalon, the expression pattern is distinct from lhx5, being localized in the pallium and subpallium. Also expressed in the ventral territories of midbrain (mesencephalon) and hindbrain (rhombencephalon), being expressed in the mesencephalic tegmentum and hindbrain reticular formation. Also shows intense expression in the cerebellum including Purkinje cells.

It localises to the nucleus. In terms of biological role, involved in the establishment of the body plan via the Spemann organizer during gastrulation. Transcriptional activator required to induce organizer gene expression downstream of siamois. Promotes head formation by binding to 5'-TAAT'-3' elements in the promoters of head organizer genes cer1 and gsc to stimulate expression. Binds as a complex with siamois and mix-A/mix.1 to the cer1 promoter, and with ldb1 and otx2 to the gsc promoter. Also involved in neural induction via the organizer, including a role in notochord formation. Acts synergistically with ldb1 and ssbp in subsequent axis formation. Involved in kidney development, acting synergistically with pax8 to establish the pronephric primordium in late gastrulae/early neurulae and with pax2 during pronephric morphogenesis in tailbud stages. Has a later role in mediating the activity of inhibitors of ventralization. The chain is LIM/homeobox protein Lhx1 (lhx1) from Xenopus laevis (African clawed frog).